The sequence spans 431 residues: Enolase (431 aa).

Position 162 (glutamine 162) interacts with (2R)-2-phosphoglycerate. The active-site Proton donor is the glutamate 204. Mg(2+)-binding residues include aspartate 241, glutamate 284, and aspartate 311. The (2R)-2-phosphoglycerate site is built by lysine 336, arginine 365, serine 366, and lysine 387. The active-site Proton acceptor is lysine 336.

The protein belongs to the enolase family. Mg(2+) serves as cofactor.

The protein resides in the cytoplasm. Its subcellular location is the secreted. It localises to the cell surface. It carries out the reaction (2R)-2-phosphoglycerate = phosphoenolpyruvate + H2O. The protein operates within carbohydrate degradation; glycolysis; pyruvate from D-glyceraldehyde 3-phosphate: step 4/5. In terms of biological role, catalyzes the reversible conversion of 2-phosphoglycerate (2-PG) into phosphoenolpyruvate (PEP). It is essential for the degradation of carbohydrates via glycolysis. This Sorangium cellulosum (strain So ce56) (Polyangium cellulosum (strain So ce56)) protein is Enolase.